Consider the following 126-residue polypeptide: Small ribosomal subunit protein uS12 (126 aa).

Asp89 carries the 3-methylthioaspartic acid modification.

Belongs to the universal ribosomal protein uS12 family. In terms of assembly, part of the 30S ribosomal subunit. Contacts proteins S8 and S17. May interact with IF1 in the 30S initiation complex.

Functionally, with S4 and S5 plays an important role in translational accuracy. In terms of biological role, interacts with and stabilizes bases of the 16S rRNA that are involved in tRNA selection in the A site and with the mRNA backbone. Located at the interface of the 30S and 50S subunits, it traverses the body of the 30S subunit contacting proteins on the other side and probably holding the rRNA structure together. The combined cluster of proteins S8, S12 and S17 appears to hold together the shoulder and platform of the 30S subunit. In Polynucleobacter necessarius subsp. necessarius (strain STIR1), this protein is Small ribosomal subunit protein uS12.